The following is a 338-amino-acid chain: Glyceraldehyde-3-phosphate dehydrogenase (338 aa).

NAD(+) contacts are provided by residues 12 to 13 (RI), aspartate 34, and arginine 79. D-glyceraldehyde 3-phosphate is bound by residues 150–152 (SCT), threonine 181, 210–211 (TG), and arginine 233. Cysteine 151 (nucleophile) is an active-site residue. Residue asparagine 316 coordinates NAD(+).

The protein belongs to the glyceraldehyde-3-phosphate dehydrogenase family. Homotetramer.

The protein resides in the cytoplasm. It catalyses the reaction D-glyceraldehyde 3-phosphate + phosphate + NAD(+) = (2R)-3-phospho-glyceroyl phosphate + NADH + H(+). Its pathway is carbohydrate degradation; glycolysis; pyruvate from D-glyceraldehyde 3-phosphate: step 1/5. The chain is Glyceraldehyde-3-phosphate dehydrogenase (GPD) from Yarrowia lipolytica (strain CLIB 122 / E 150) (Yeast).